The primary structure comprises 4650 residues: Nonribosomal peptide synthetase lenA (4650 aa).

The adenylation 1 stretch occupies residues 227-628; that stretch reads GSILDTIRAK…DGSVIHVGRK (402 aa). A Carrier 1 domain is found at 773-849; sequence PPETVLEKAL…KLAQYLRNTE (77 aa). S810 is subject to O-(pantetheine 4'-phosphoryl)serine. A condensation 1 region spans residues 890-1212; it reads EDCYPCTALQ…CDFQSQLIFQ (323 aa). The adenylation 2 stretch occupies residues 1288–1622; the sequence is ELELNAQKEP…RKIRPGYLGR (335 aa). The region spanning 1745-1822 is the Carrier 2 domain; it reads PPVSAAEKKW…EIAALSETRD (78 aa). At S1782 the chain carries O-(pantetheine 4'-phosphoryl)serine. Residues 1850–2110 form a condensation 2 region; the sequence is ATNLIAATVH…GEKTRPGGGA (261 aa). The interval 2183–2511 is adenylation 3; that stretch reads RCVHDLVHDA…RTGDLIKLRG (329 aa). The Carrier 3 domain occupies 2630–2708; it reads APQNRLQHDI…EADVGLDHAS (79 aa). An O-(pantetheine 4'-phosphoryl)serine modification is found at S2667. The interval 2722–2998 is epimerase; it reads ESMARALAVI…KDARRRSPAN (277 aa). The tract at residues 3128 to 3565 is condensation 3; it reads VQDVYPCTPI…VDDSQRQQIL (438 aa). The segment at 3578–3980 is adenylation 4; the sequence is CVHHIIHQRC…FVGRKDNQIK (403 aa). The region spanning 4114-4190 is the Carrier 4 domain; that stretch reads TPSTPLEAQL…QLAAVLEEGA (77 aa). S4151 is subject to O-(pantetheine 4'-phosphoryl)serine. Residues 4249-4648 are condensation 4; it reads HMVLTFSQPV…TTTPEKLVAE (400 aa).

It belongs to the NRP synthetase family. It depends on pantetheine 4'-phosphate as a cofactor.

Its pathway is alkaloid biosynthesis. In terms of biological role, nonribosomal peptide synthetase; part of the gene cluster that mediates the biosynthesis of the ergot alkaloids lentopeptins A and B. Within the pathway, lenA catalyzes the biosynthesis of the Ala-Val-Ala peptide chain, including a cinnamic acid moiety as the starting unit. The release of the peptide from the enzyme is accomplished via a cyclization reaction catalyzed by the terminal condensation-like (Ct) domain of lenA to form the N-acyldiketopiperazine intermediate. The reaction appears to proceed through a nucleophilic attack on the carbonyl carbon by a lone electron pair of the valine amide nitrogen. The phenylalanine ammonia-lyase lenB provides the starter unit for the synthesis of the N-acyldiketopiperazine intermediate by the NRPS lenA, while the cytochrome P450 monooxygenase lenC is involved in the post-NRPS oxidative modification steps to form lentopeptins A and B. The sequence is that of Nonribosomal peptide synthetase lenA from Aspergillus lentulus.